Here is a 383-residue protein sequence, read N- to C-terminus: Succinyl-diaminopimelate desuccinylase (383 aa).

Histidine 73 is a binding site for Zn(2+). Aspartate 75 is an active-site residue. Aspartate 107 is a Zn(2+) binding site. The active-site Proton acceptor is the glutamate 141. The Zn(2+) site is built by glutamate 142, glutamate 170, and histidine 356.

This sequence belongs to the peptidase M20A family. DapE subfamily. As to quaternary structure, homodimer. Requires Zn(2+) as cofactor. The cofactor is Co(2+).

The enzyme catalyses N-succinyl-(2S,6S)-2,6-diaminopimelate + H2O = (2S,6S)-2,6-diaminopimelate + succinate. Its pathway is amino-acid biosynthesis; L-lysine biosynthesis via DAP pathway; LL-2,6-diaminopimelate from (S)-tetrahydrodipicolinate (succinylase route): step 3/3. Its function is as follows. Catalyzes the hydrolysis of N-succinyl-L,L-diaminopimelic acid (SDAP), forming succinate and LL-2,6-diaminopimelate (DAP), an intermediate involved in the bacterial biosynthesis of lysine and meso-diaminopimelic acid, an essential component of bacterial cell walls. The protein is Succinyl-diaminopimelate desuccinylase of Pseudomonas fluorescens (strain Pf0-1).